The primary structure comprises 367 residues: ELAV-like protein 3 (367 aa).

RRM domains lie at 39–117, 125–205, and 284–362; these read TNLI…YARP, ANLY…FANN, and WCIF…FKTS.

It belongs to the RRM elav family. As to quaternary structure, interacts with MAP1B light chain LC1. Brain specific.

RNA-binding protein that binds to AU-rich element (ARE) sequences of target mRNAs, including VEGF mRNA. May also bind poly-A tracts via RRM 3. May be involved in neuronal differentiation and maintenance. Plays a role in the stabilization of GAP43 mRNA and in spatial learning. The protein is ELAV-like protein 3 (ELAVL3) of Homo sapiens (Human).